The following is a 130-amino-acid chain: Large ribosomal subunit protein eL32 (130 aa).

The protein belongs to the eukaryotic ribosomal protein eL32 family.

In Pyrococcus abyssi (strain GE5 / Orsay), this protein is Large ribosomal subunit protein eL32 (rpl32e).